The following is a 117-amino-acid chain: Large ribosomal subunit protein uL22 (117 aa).

The protein belongs to the universal ribosomal protein uL22 family. Part of the 50S ribosomal subunit.

This protein binds specifically to 23S rRNA; its binding is stimulated by other ribosomal proteins, e.g. L4, L17, and L20. It is important during the early stages of 50S assembly. It makes multiple contacts with different domains of the 23S rRNA in the assembled 50S subunit and ribosome. In terms of biological role, the globular domain of the protein is located near the polypeptide exit tunnel on the outside of the subunit, while an extended beta-hairpin is found that lines the wall of the exit tunnel in the center of the 70S ribosome. This chain is Large ribosomal subunit protein uL22, found in Lactobacillus gasseri (strain ATCC 33323 / DSM 20243 / BCRC 14619 / CIP 102991 / JCM 1131 / KCTC 3163 / NCIMB 11718 / NCTC 13722 / AM63).